A 473-amino-acid chain; its full sequence is Photosystem II CP43 reaction center protein (473 aa).

Positions 1-14 (MKTLYSLRRFYHVE) are excised as a propeptide. Position 15 is an N-acetylthreonine (Thr-15). Position 15 is a phosphothreonine (Thr-15). Transmembrane regions (helical) follow at residues 69–93 (LFEVAHFVPEKPMYEQGLILLPHLA), 134–155 (LLGPETLEESFPFFGYVWKDRN), 178–200 (KALYFGGVYDTWAPGGGDVRKIT), 255–275 (KPFAWARRALVWSGEAYLSYS), and 291–312 (WFNNTAYPSEFYGPTGPEASQA). Glu-367 contributes to the [CaMn4O5] cluster binding site. The chain crosses the membrane as a helical span at residues 447-471 (RARAAAAGFEKGIDRDFEPVLSMTP).

Belongs to the PsbB/PsbC family. PsbC subfamily. As to quaternary structure, PSII is composed of 1 copy each of membrane proteins PsbA, PsbB, PsbC, PsbD, PsbE, PsbF, PsbH, PsbI, PsbJ, PsbK, PsbL, PsbM, PsbT, PsbX, PsbY, PsbZ, Psb30/Ycf12, at least 3 peripheral proteins of the oxygen-evolving complex and a large number of cofactors. It forms dimeric complexes. It depends on Binds multiple chlorophylls and provides some of the ligands for the Ca-4Mn-5O cluster of the oxygen-evolving complex. It may also provide a ligand for a Cl- that is required for oxygen evolution. PSII binds additional chlorophylls, carotenoids and specific lipids. as a cofactor.

The protein resides in the plastid. It is found in the chloroplast thylakoid membrane. Functionally, one of the components of the core complex of photosystem II (PSII). It binds chlorophyll and helps catalyze the primary light-induced photochemical processes of PSII. PSII is a light-driven water:plastoquinone oxidoreductase, using light energy to abstract electrons from H(2)O, generating O(2) and a proton gradient subsequently used for ATP formation. The polypeptide is Photosystem II CP43 reaction center protein (Manihot esculenta (Cassava)).